The primary structure comprises 957 residues: Calsyntenin-3 (957 aa).

The N-terminal stretch at methionine 1 to cysteine 19 is a signal peptide. The Extracellular segment spans residues asparagine 20–alanine 848. 2 Cadherin domains span residues isoleucine 29–phenylalanine 145 and valine 146–tryptophan 246. Asparagine 299, asparagine 347, and asparagine 508 each carry an N-linked (GlcNAc...) asparagine glycan. The chain crosses the membrane as a helical span at residues alanine 849–valine 869. Residues arginine 870–tyrosine 957 lie on the Cytoplasmic side of the membrane. A disordered region spans residues cysteine 919 to tyrosine 957. The segment covering glutamine 928 to alanine 938 has biased composition (acidic residues). Over residues serine 944–tyrosine 957 the composition is skewed to basic and acidic residues.

The protein belongs to the calsyntenin family. Interacts (via cadherin domains) with both alpha and beta isoforms of neurexins (NRXN1, NRXN2 and NRXN3). Directly interacts with APBA2. Forms a tripartite complex with APBA2 and APP. Interacts with low affinity with KLC1. Interacts with SLC23A2/SVCT2. In terms of processing, proteolytically processed under normal cellular conditions. A primary zeta-cleavage generates a large extracellular (soluble) N-terminal domain (sAlc) and a short C-terminal transmembrane fragment (CTF1). A secondary cleavage catalyzed by gamma-secretase within the transmembrane domain releases the beta-Alc-beta chain in the extracellular milieu and produces an intracellular fragment (AlcICD). This processing is strongly suppressed in the tripartite complex formed with APBA2 and APP, which seems to prevent the association with gamma-secretase.

The protein resides in the postsynaptic cell membrane. It localises to the endoplasmic reticulum membrane. The protein localises to the golgi apparatus membrane. It is found in the cell projection. Its subcellular location is the dendrite. Postsynaptic adhesion molecule that binds to presynaptic neurexins to mediate both excitatory and inhibitory synapse formation. Promotes synapse development by acting as a cell adhesion molecule at the postsynaptic membrane, which associates with both neurexin-alpha and neurexin-beta proteins at the presynaptic membrane. Regulates the balance between excitatory and inhibitory synapses by inhibiting formation of excitatory parallel-fiber synapses and promoting formation of inhibitory synapses in the same neuron. May also be involved in ascorbate (vitamin C) uptake via its interaction with SLC23A2/SVCT2. Complex formation with APBA2 and APP, stabilizes APP metabolism and enhances APBA2-mediated suppression of beta-APP40 secretion, due to the retardation of intracellular APP maturation. The chain is Calsyntenin-3 (CLSTN3) from Bos taurus (Bovine).